A 456-amino-acid chain; its full sequence is Phytase A (456 aa).

The first 24 residues, 1 to 24, serve as a signal peptide directing secretion; the sequence is MSSMASVLFAALAISGVQVTPSRG. 1D-myo-inositol hexakisphosphate is bound by residues Gln37, Tyr38, Arg68, His69, Arg72, Thr75, and Arg152. 4 cysteine pairs are disulfide-bonded: Cys58-Cys396, Cys197-Cys450, Cys246-Cys264, and Cys421-Cys429. The Nucleophile role is filled by His69. Lys283 contacts 1D-myo-inositol hexakisphosphate. The N-linked (GlcNAc...) asparagine glycan is linked to Asn317. The 1D-myo-inositol hexakisphosphate site is built by His343 and Asp344. The N-linked (GlcNAc...) asparagine glycan is linked to Asn358.

Belongs to the histidine acid phosphatase family. Monomer.

It is found in the secreted. The enzyme catalyses 1D-myo-inositol hexakisphosphate + H2O = 1D-myo-inositol 1,2,4,5,6-pentakisphosphate + phosphate. The catalysed reaction is 1D-myo-inositol 1,2,4,5,6-pentakisphosphate + H2O = 1D-myo-inositol 1,2,5,6-tetrakisphosphate + phosphate. It carries out the reaction 1D-myo-inositol 1,2,5,6-tetrakisphosphate + H2O = 1D-myo-inositol 1,2,6-trisphosphate + phosphate. It catalyses the reaction 1D-myo-inositol 1,2,6-trisphosphate + H2O = 1D-myo-inositol 1,2-bisphosphate + phosphate. The enzyme catalyses 1D-myo-inositol 1,2-bisphosphate + H2O = 1D-myo-inositol 2-phosphate + phosphate. In terms of biological role, catalyzes the phosphate monoester hydrolysis of phytic acid (myo-inositol hexakisphosphate), which results in the stepwise formation of myo-inositol pentakis-, tetrakis-, tris-, bis-, and monophosphates, as well as the liberation of inorganic phosphate. Myo-inositol 2-monophosphate is the end product. In Arthroderma benhamiae (strain ATCC MYA-4681 / CBS 112371) (Trichophyton mentagrophytes), this protein is Phytase A.